A 339-amino-acid polypeptide reads, in one-letter code: DNA-directed RNA polymerase subunit alpha (339 aa).

The interval 1–233 (MVREEVAGST…DLFLPFLHAE (233 aa)) is alpha N-terminal domain (alpha-NTD). An alpha C-terminal domain (alpha-CTD) region spans residues 264–339 (KKGIPLNCIF…IDLLKNKLSF (76 aa)).

It belongs to the RNA polymerase alpha chain family. In plastids the minimal PEP RNA polymerase catalytic core is composed of four subunits: alpha, beta, beta', and beta''. When a (nuclear-encoded) sigma factor is associated with the core the holoenzyme is formed, which can initiate transcription.

Its subcellular location is the plastid. It localises to the chloroplast. The enzyme catalyses RNA(n) + a ribonucleoside 5'-triphosphate = RNA(n+1) + diphosphate. Functionally, DNA-dependent RNA polymerase catalyzes the transcription of DNA into RNA using the four ribonucleoside triphosphates as substrates. This Elymus hystrix (Eastern bottlebrush grass) protein is DNA-directed RNA polymerase subunit alpha.